Here is a 347-residue protein sequence, read N- to C-terminus: NADH-ubiquinone oxidoreductase chain 2 (347 aa).

The next 11 membrane-spanning stretches (helical) occupy residues 1 to 21 (MNPI…MIVM), 25 to 45 (HWLM…PILM), 60 to 80 (FLTQ…NLMF), 89 to 109 (IFNP…LGLS), 111 to 131 (FHFW…LILL), 149 to 169 (INLD…GWGG), 178 to 198 (IMAY…TYNP), 201 to 221 (TALN…LFML), 242 to 262 (SLIL…GFIP), 274 to 294 (DSII…YFYM), and 323 to 343 (MNFL…TPIM).

The protein belongs to the complex I subunit 2 family. Core subunit of respiratory chain NADH dehydrogenase (Complex I) which is composed of 45 different subunits. Interacts with TMEM242.

It is found in the mitochondrion inner membrane. The catalysed reaction is a ubiquinone + NADH + 5 H(+)(in) = a ubiquinol + NAD(+) + 4 H(+)(out). In terms of biological role, core subunit of the mitochondrial membrane respiratory chain NADH dehydrogenase (Complex I) which catalyzes electron transfer from NADH through the respiratory chain, using ubiquinone as an electron acceptor. Essential for the catalytic activity and assembly of complex I. This is NADH-ubiquinone oxidoreductase chain 2 from Ceratotherium simum (White rhinoceros).